Here is a 207-residue protein sequence, read N- to C-terminus: Uracil phosphoribosyltransferase (207 aa).

Residues Arg77, Arg102, and 129–137 (DPMLATGGS) each bind 5-phospho-alpha-D-ribose 1-diphosphate. Residues Ile192 and 197–199 (GDA) contribute to the uracil site. Asp198 provides a ligand contact to 5-phospho-alpha-D-ribose 1-diphosphate.

The protein belongs to the UPRTase family. It depends on Mg(2+) as a cofactor.

The catalysed reaction is UMP + diphosphate = 5-phospho-alpha-D-ribose 1-diphosphate + uracil. It functions in the pathway pyrimidine metabolism; UMP biosynthesis via salvage pathway; UMP from uracil: step 1/1. Allosterically activated by GTP. Its function is as follows. Catalyzes the conversion of uracil and 5-phospho-alpha-D-ribose 1-diphosphate (PRPP) to UMP and diphosphate. In Mesoplasma florum (strain ATCC 33453 / NBRC 100688 / NCTC 11704 / L1) (Acholeplasma florum), this protein is Uracil phosphoribosyltransferase.